The chain runs to 583 residues: Threonine--tRNA ligase (583 aa).

Residues 185–478 (DHRKLGRELD…LVEHYGGAFP (294 aa)) form a catalytic region. Zn(2+) contacts are provided by cysteine 278, histidine 329, and histidine 455.

Belongs to the class-II aminoacyl-tRNA synthetase family. In terms of assembly, homodimer. It depends on Zn(2+) as a cofactor.

Its subcellular location is the cytoplasm. It catalyses the reaction tRNA(Thr) + L-threonine + ATP = L-threonyl-tRNA(Thr) + AMP + diphosphate + H(+). Its function is as follows. Catalyzes the attachment of threonine to tRNA(Thr) in a two-step reaction: L-threonine is first activated by ATP to form Thr-AMP and then transferred to the acceptor end of tRNA(Thr). Also edits incorrectly charged L-seryl-tRNA(Thr). This chain is Threonine--tRNA ligase, found in Borrelia hermsii (strain HS1 / DAH).